The primary structure comprises 94 residues: Large ribosomal subunit protein uL23 (94 aa).

This sequence belongs to the universal ribosomal protein uL23 family. Part of the 50S ribosomal subunit. Contacts protein L29, and trigger factor when it is bound to the ribosome.

Its function is as follows. One of the early assembly proteins it binds 23S rRNA. One of the proteins that surrounds the polypeptide exit tunnel on the outside of the ribosome. Forms the main docking site for trigger factor binding to the ribosome. This Trichlorobacter lovleyi (strain ATCC BAA-1151 / DSM 17278 / SZ) (Geobacter lovleyi) protein is Large ribosomal subunit protein uL23.